We begin with the raw amino-acid sequence, 77 residues long: Acyl carrier protein (77 aa).

One can recognise a Carrier domain in the interval 1-76; the sequence is MSLEDDVKAI…DVIKYIQERQ (76 aa). Ser-36 is subject to O-(pantetheine 4'-phosphoryl)serine.

Belongs to the acyl carrier protein (ACP) family. 4'-phosphopantetheine is transferred from CoA to a specific serine of apo-ACP by AcpS. This modification is essential for activity because fatty acids are bound in thioester linkage to the sulfhydryl of the prosthetic group.

The protein resides in the cytoplasm. The protein operates within lipid metabolism; fatty acid biosynthesis. Carrier of the growing fatty acid chain in fatty acid biosynthesis. This chain is Acyl carrier protein, found in Chlamydia muridarum (strain MoPn / Nigg).